A 432-amino-acid polypeptide reads, in one-letter code: 3-phosphoshikimate 1-carboxyvinyltransferase (432 aa).

Residues Lys22, Ser23, and Arg27 each contribute to the 3-phosphoshikimate site. Residue Lys22 participates in phosphoenolpyruvate binding. 2 residues coordinate phosphoenolpyruvate: Gly96 and Arg127. The 3-phosphoshikimate site is built by Ser173, Ser174, Gln175, Ser201, Asp316, Asn339, and Lys343. Position 175 (Gln175) interacts with phosphoenolpyruvate. The Proton acceptor role is filled by Asp316. Residues Arg347, Arg391, and Lys416 each coordinate phosphoenolpyruvate.

Belongs to the EPSP synthase family. Monomer.

The protein resides in the cytoplasm. The enzyme catalyses 3-phosphoshikimate + phosphoenolpyruvate = 5-O-(1-carboxyvinyl)-3-phosphoshikimate + phosphate. Its pathway is metabolic intermediate biosynthesis; chorismate biosynthesis; chorismate from D-erythrose 4-phosphate and phosphoenolpyruvate: step 6/7. In terms of biological role, catalyzes the transfer of the enolpyruvyl moiety of phosphoenolpyruvate (PEP) to the 5-hydroxyl of shikimate-3-phosphate (S3P) to produce enolpyruvyl shikimate-3-phosphate and inorganic phosphate. The sequence is that of 3-phosphoshikimate 1-carboxyvinyltransferase from Haemophilus influenzae (strain 86-028NP).